The primary structure comprises 366 residues: DNA replication and repair protein RecF (366 aa).

30-37 contacts ATP; the sequence is GRNAQGKT.

Belongs to the RecF family.

Its subcellular location is the cytoplasm. Functionally, the RecF protein is involved in DNA metabolism; it is required for DNA replication and normal SOS inducibility. RecF binds preferentially to single-stranded, linear DNA. It also seems to bind ATP. This chain is DNA replication and repair protein RecF, found in Streptococcus thermophilus (strain ATCC BAA-250 / LMG 18311).